Here is a 131-residue protein sequence, read N- to C-terminus: Outer membrane protein assembly factor BamE (131 aa).

A signal peptide spans 1–16; the sequence is MRNLLLVAAVALSTAG. Cys17 carries N-palmitoyl cysteine lipidation. Cys17 is lipidated: S-diacylglycerol cysteine. Positions 112-131 are disordered; it reads SAPKQFGRNLARDKKKQRGR.

This sequence belongs to the BamE family. In terms of assembly, part of the Bam complex.

Its subcellular location is the cell outer membrane. Its function is as follows. Part of the outer membrane protein assembly complex, which is involved in assembly and insertion of beta-barrel proteins into the outer membrane. This chain is Outer membrane protein assembly factor BamE, found in Xanthomonas campestris pv. campestris (strain ATCC 33913 / DSM 3586 / NCPPB 528 / LMG 568 / P 25).